Consider the following 364-residue polypeptide: Pyrimidine monooxygenase RutA (364 aa).

FMN contacts are provided by residues 49-50 (IK), Asn115, Glu124, 140-141 (RY), and Ser190.

The protein belongs to the NtaA/SnaA/DszA monooxygenase family. RutA subfamily.

The catalysed reaction is uracil + FMNH2 + NADH + O2 = (Z)-3-ureidoacrylate + FMN + NAD(+) + H2O + H(+). The enzyme catalyses thymine + FMNH2 + NADH + O2 = (Z)-2-methylureidoacrylate + FMN + NAD(+) + H2O + H(+). Its function is as follows. Catalyzes the pyrimidine ring opening between N-3 and C-4 by an unusual flavin hydroperoxide-catalyzed mechanism, adding oxygen atoms in the process to yield ureidoacrylate peracid, that immediately reacts with FMN forming ureidoacrylate and FMN-N(5)-oxide. The FMN-N(5)-oxide reacts spontaneously with NADH to produce FMN. Requires the flavin reductase RutF to regenerate FMN in vivo. This is Pyrimidine monooxygenase RutA from Methylorubrum extorquens (strain ATCC 14718 / DSM 1338 / JCM 2805 / NCIMB 9133 / AM1) (Methylobacterium extorquens).